The chain runs to 330 residues: MKQLVCVLFVCSSAVTQLHKDPTLDHHWNLWKKTYGKQYKEKNEEAVRRLIWEKNLKFVMLHNLEHSMGMHSYDLGMNHLGDMTSEEVMSLMSSLRVPNQWQRNITYKSNPNQMLPDSVDWREKGCVTEVKYQGSCGACWAFSAVGALEAQLKLKTGKLVSLSAQNLVDCSEKYGNKGCNGGFMTEAFQYIIDNKGIDSEASYPYKATDQKCQYDSKYRAATCSKYTELPYGREDVLKEAVANKGPVCVGVDASHPSFFLYRSGVYYDPACTQKVNHGVLVIGYGDLNGKEYWLVKNSWGSNFGEQGYIRMARNKGNHCGIASYPSYPEI.

Positions 1–17 (MKQLVCVLFVCSSAVTQ) are cleaved as a signal peptide. Residues 18 to 114 (LHKDPTLDHH…ITYKSNPNQM (97 aa)) constitute a propeptide, activation peptide. Residue Asn-104 is glycosylated (N-linked (GlcNAc...) asparagine). 4 disulfides stabilise this stretch: Cys-126/Cys-223, Cys-136/Cys-179, Cys-170/Cys-212, and Cys-271/Cys-319. Cys-139 is an active-site residue. Residues His-277 and Asn-297 contribute to the active site.

It belongs to the peptidase C1 family.

Its subcellular location is the lysosome. It is found in the secreted. The protein localises to the cytoplasmic vesicle. It localises to the phagosome. It carries out the reaction Similar to cathepsin L, but with much less activity on Z-Phe-Arg-|-NHMec, and more activity on the Z-Val-Val-Arg-|-Xaa compound.. Thiol protease. Key protease responsible for the removal of the invariant chain from MHC class II molecules and MHC class II antigen presentation. The bond-specificity of this proteinase is in part similar to the specificities of cathepsin L. The polypeptide is Cathepsin S (CTSS) (Saimiri boliviensis boliviensis (Bolivian squirrel monkey)).